The primary structure comprises 384 residues: MSLLTLIAGVAVGVTVVPRIVARRQRRAAYAAGMTVSQMLQHITSLSPMGVAVVDTFNDVVYSNDRAVELNVVRDRILDDRAWQAAQRVFETGQDVEVDLSPLKVANPGRSGISVRGKVRLLTDDDRRFAVVYIDDQSEHARMEATRRDFVANVSHELKTPVGAMSVLAEALLASADDPDTVRRFAEKMVAESHRLADMIGELIELSRLQGAERLPDLDAVDVDSIVSEAVSRHKVAADNSQISITTDAPTGYRVLGDEGLLVTAIANLVSNAIAYSPNGTDVSISRRKRGGNIEIAVTDRGIGIAKDDQERVFERFFRVDKARSRATGGTGLGLAIVKHVAANHNGSIRLWSQPGTGSTFTLSIPEYPDPESHSDEREDQRER.

In terms of domain architecture, Histidine kinase spans Asn-153–Pro-369. Residue His-156 is modified to Phosphohistidine; by autocatalysis. A disordered region spans residues Thr-360–Arg-384. Residues Pro-371–Arg-384 are compositionally biased toward basic and acidic residues.

Post-translationally, autophosphorylated.

It is found in the cell membrane. The enzyme catalyses ATP + protein L-histidine = ADP + protein N-phospho-L-histidine.. Member of the two-component regulatory system SenX3/RegX3 involved in stress response. The system is involved in phosphate starvation response. Probably exhibits a dual role as a phosphatase or a phosphodonor for the response regulator RegX3, depending upon phosphate availability. When environmental phosphate is abundant, SenX3 is required to maintain RegX3 in an unphosphorylated state, where it is unable to bind target DNA. Under conditions of phosphate limitation, SenX3 autophosphorylates and then transfers the phosphate group to RegX3. Probably does not itself sense phosphate concentrations, which may be relayed to SenX3 by the PstSCAB phosphate transporter system. This Mycolicibacterium smegmatis (strain ATCC 700084 / mc(2)155) (Mycobacterium smegmatis) protein is Sensor-like histidine kinase SenX3.